A 224-amino-acid chain; its full sequence is V-type ATP synthase subunit D (224 aa).

Positions 205 to 214 (AKAKQQRKDI) are enriched in basic and acidic residues. Residues 205-224 (AKAKQQRKDIQSGNHGSAAD) are disordered. Over residues 215 to 224 (QSGNHGSAAD) the composition is skewed to polar residues.

Belongs to the V-ATPase D subunit family.

In terms of biological role, produces ATP from ADP in the presence of a proton gradient across the membrane. The polypeptide is V-type ATP synthase subunit D (Deinococcus deserti (strain DSM 17065 / CIP 109153 / LMG 22923 / VCD115)).